A 722-amino-acid polypeptide reads, in one-letter code: Glycine--tRNA ligase beta subunit (722 aa).

Belongs to the class-II aminoacyl-tRNA synthetase family. Tetramer of two alpha and two beta subunits.

The protein localises to the cytoplasm. The enzyme catalyses tRNA(Gly) + glycine + ATP = glycyl-tRNA(Gly) + AMP + diphosphate. The chain is Glycine--tRNA ligase beta subunit from Xylella fastidiosa (strain M12).